We begin with the raw amino-acid sequence, 718 residues long: Catalase-peroxidase (718 aa).

Residues 98-219 (WHAAGTYRMG…LAATEMGLIY (122 aa)) constitute a cross-link (tryptophyl-tyrosyl-methioninium (Trp-Tyr) (with M-245)). Residue H99 is the Proton acceptor of the active site. The segment at residues 219 to 245 (YVNPEGPQASGDPRSAAPFIRATFGNM) is a cross-link (tryptophyl-tyrosyl-methioninium (Tyr-Met) (with W-98)). A heme b-binding site is contributed by H260.

This sequence belongs to the peroxidase family. Peroxidase/catalase subfamily. In terms of assembly, homodimer or homotetramer. Heme b is required as a cofactor. Post-translationally, formation of the three residue Trp-Tyr-Met cross-link is important for the catalase, but not the peroxidase activity of the enzyme.

It carries out the reaction H2O2 + AH2 = A + 2 H2O. The enzyme catalyses 2 H2O2 = O2 + 2 H2O. Its function is as follows. Bifunctional enzyme with both catalase and broad-spectrum peroxidase activity. This Acinetobacter baumannii (strain AB307-0294) protein is Catalase-peroxidase.